We begin with the raw amino-acid sequence, 120 residues long: Membrane-anchored ubiquitin-fold protein 5 (120 aa).

A Ubiquitin-like domain is found at 7 to 72; the sequence is IELKFRLADG…ILENNKTLSE (66 aa). Residue Cys115 is the site of S-palmitoyl cysteine attachment. Cys117 carries the post-translational modification Cysteine methyl ester. Cys117 carries the S-geranylgeranyl cysteine lipid modification. The propeptide at 118 to 120 is removed in mature form; the sequence is CIL.

In terms of tissue distribution, ubiquitous.

The protein resides in the cell membrane. May serve as docking site to facilitate the association of other proteins to the plasma membrane. This Arabidopsis thaliana (Mouse-ear cress) protein is Membrane-anchored ubiquitin-fold protein 5 (MUB5).